Consider the following 199-residue polypeptide: Large ribosomal subunit protein bL9 (199 aa).

The tract at residues 169 to 199 (TGGFTEEYDPNAEPGEIPTELLEGGEEAAEA) is disordered.

Belongs to the bacterial ribosomal protein bL9 family.

Functionally, binds to the 23S rRNA. The chain is Large ribosomal subunit protein bL9 from Novosphingobium aromaticivorans (strain ATCC 700278 / DSM 12444 / CCUG 56034 / CIP 105152 / NBRC 16084 / F199).